Consider the following 528-residue polypeptide: Chaperonin GroEL, chloroplastic (528 aa).

Residues 29-32, 86-90, Gly-414, and Asp-496 contribute to the ATP site; these read TLGP and DGTTT.

The protein belongs to the chaperonin (HSP60) family. Forms a cylinder of 14 subunits composed of two heptameric rings stacked back-to-back. Interacts with the co-chaperonin GroES.

Its subcellular location is the plastid. The protein resides in the chloroplast. It carries out the reaction ATP + H2O + a folded polypeptide = ADP + phosphate + an unfolded polypeptide.. Together with its co-chaperonin GroES, plays an essential role in assisting protein folding. The GroEL-GroES system forms a nano-cage that allows encapsulation of the non-native substrate proteins and provides a physical environment optimized to promote and accelerate protein folding. In Porphyra purpurea (Red seaweed), this protein is Chaperonin GroEL, chloroplastic.